A 541-amino-acid polypeptide reads, in one-letter code: Beta-hexosaminidase 1 (541 aa).

Residues 1–20 (MSTNLLRLILLFITLSITSS) form the signal peptide. Residues asparagine 44 and asparagine 304 are each glycosylated (N-linked (GlcNAc...) asparagine). A disulfide bridge links cysteine 295 with cysteine 337. Residue glutamate 332 is the Proton donor of the active site. Asparagine 340, asparagine 352, and asparagine 497 each carry an N-linked (GlcNAc...) asparagine glycan. The cysteines at positions 511 and 538 are disulfide-linked.

Belongs to the glycosyl hydrolase 20 family. N-glycosylated. As to expression, expressed in roots, leaves, stems, flowers and siliques.

The protein resides in the vacuole. The catalysed reaction is Hydrolysis of terminal non-reducing N-acetyl-D-hexosamine residues in N-acetyl-beta-D-hexosaminides.. With respect to regulation, inhibited by N-acetylcastanospermine, 2-acet-amido-1,2-dideoxynojirimycin and PUGNAc. Has a broad substrate specificity. Can use synthetic substrates such as pyridylaminated chitotriose, pyridylaminated chitobiose, p-nitrophenyl-beta-N-acetylglucosaminide, p-nitrophenyl-2-acetamido-2-deoxy-beta-D-glucopyranoside (pNP-GlcNAc), p-nitrophenyl-2-acetamido-2-deoxy-beta-D-galactopyranoside (pNP-GalNAc), 4-methylumbelliferyl-2-acetamido-2-deoxy-beta-D-glucopyranoside (MU-GlcNAc), and 4-methylumbelliferyl-6-sulfo-2-acetamido-2-deoxy-beta-D-glucopyranoside (MU-GlcNAc-6SO(4)) as substrates. Removes terminal GlcNAc residues from alpha1,3- and alpha1,6-mannosyl branches of biantennary N-glycans without any strict branch preference. Required for the presence of paucimannosidic N-glycans in glycoproteins of roots and, to a lower extent, of leaves. The chain is Beta-hexosaminidase 1 (HEXO1) from Arabidopsis thaliana (Mouse-ear cress).